Consider the following 262-residue polypeptide: Ribosomal RNA small subunit methyltransferase A (262 aa).

Asparagine 12, leucine 14, glycine 38, glutamate 60, aspartate 83, and asparagine 102 together coordinate S-adenosyl-L-methionine.

Belongs to the class I-like SAM-binding methyltransferase superfamily. rRNA adenine N(6)-methyltransferase family. RsmA subfamily.

Its subcellular location is the cytoplasm. The catalysed reaction is adenosine(1518)/adenosine(1519) in 16S rRNA + 4 S-adenosyl-L-methionine = N(6)-dimethyladenosine(1518)/N(6)-dimethyladenosine(1519) in 16S rRNA + 4 S-adenosyl-L-homocysteine + 4 H(+). In terms of biological role, specifically dimethylates two adjacent adenosines (A1518 and A1519) in the loop of a conserved hairpin near the 3'-end of 16S rRNA in the 30S particle. May play a critical role in biogenesis of 30S subunits. The sequence is that of Ribosomal RNA small subunit methyltransferase A from Pelagibacter ubique (strain HTCC1062).